The following is a 461-amino-acid chain: D-phenylhydantoinase (461 aa).

A divalent metal cation is bound by residues His59, His61, and Lys151. Lys151 is subject to N6-carboxylysine. Substrate is bound at residue Tyr156. Residues His182 and His239 each coordinate a divalent metal cation. Ser286 provides a ligand contact to substrate. Asp313 provides a ligand contact to a divalent metal cation. A substrate-binding site is contributed by Asn335.

Belongs to the metallo-dependent hydrolases superfamily. Hydantoinase/dihydropyrimidinase family. In terms of assembly, homotetramer. A divalent metal cation is required as a cofactor. Post-translationally, carboxylation allows a single lysine to coordinate two divalent metal cations.

The catalysed reaction is D-5-phenylhydantoin + H2O = N-carbamoyl-D-phenylglycine + H(+). Catalyzes the stereospecific hydrolysis of the cyclic amide bond of D-hydantoin derivatives with an aromatic side chains at the 5'-position. Has no activity on dihydropyrimidines. The physiological function is unknown. The sequence is that of D-phenylhydantoinase from Escherichia coli (strain 55989 / EAEC).